A 405-amino-acid polypeptide reads, in one-letter code: Argininosuccinate synthase (405 aa).

ATP is bound at residue Ala-11–Ser-19. Residue Tyr-90 participates in L-citrulline binding. ATP is bound at residue Gly-119. L-aspartate is bound by residues Thr-121, Asn-125, and Asp-126. An L-citrulline-binding site is contributed by Asn-125. 5 residues coordinate L-citrulline: Arg-129, Ser-178, Ser-187, Glu-263, and Tyr-275.

Belongs to the argininosuccinate synthase family. Type 1 subfamily. In terms of assembly, homotetramer.

The protein resides in the cytoplasm. It carries out the reaction L-citrulline + L-aspartate + ATP = 2-(N(omega)-L-arginino)succinate + AMP + diphosphate + H(+). It participates in amino-acid biosynthesis; L-arginine biosynthesis; L-arginine from L-ornithine and carbamoyl phosphate: step 2/3. The protein is Argininosuccinate synthase of Legionella pneumophila subsp. pneumophila (strain Philadelphia 1 / ATCC 33152 / DSM 7513).